Consider the following 1094-residue polypeptide: MATEAAPPRIAVRLPSTSVRDAGANYRIARYVAVVAGLLGAVLAIATPLLPVNQTTAQLNWPQNGTFASVEAPLIGYVATDLNITVPCQAAAGLAGSQNTGKTVLLSTVPKQAPKAVDRGLLLQRANDDLVLVVRNVPLVTAPLSQVLGPTCQRLTFTAHADRVAAEFVGLVQGPNAEHPGAPLRGERSGYDFRPQIVGVFTDLAGPAPPGLSFSASVDTRYSSSPTPLKMAAMILGVALTGAALVALHILDTADGMRHRRFLPARWWSIGGLDTLVIAVLVWWHFVGANTSDDGYILTMARVSEHAGYMANYYRWFGTPEAPFGWYYDLLALWAHVSTASIWMRLPTLAMALTCWWVISREVIPRLGHAVKTSRAAAWTAAGMFLAVWLPLDNGLRPEPIIALGILLTWCSVERAVATSRLLPVAIACIIGALTLFSGPTGIASIGALLVAIGPLRTILHRRSRRFGVLPLVAPILAAATVTAIPIFRDQTFAGEIQANLLKRAVGPSLKWFDEHIRYERLFMASPDGSIARRFAVLALVLALAVSVAMSLRKGRIPGTAAGPSRRIIGITIISFLAMMFTPTKWTHHFGVFAGLAGSLGALAAVAVTGAAMRSRRNRTVFAAVVVFVLALSFASVNGWWYVSNFGVPWSNSFPKWRWSLTTALLELTVLVLLLAAWFHFVANGDGRRTARPTRFRARLAGIVQSPLAIATWLLVLFEVVSLTQAMISQYPAWSVGRSNLQALAGKTCGLAEDVLVELDPNAGMLAPVTAPLADALGAGLSEAFTPNGIPADVTADPVMERPGDRSFLNDDGLITGSEPGTEGGTTAAPGINGSRARLPYNLDPARTPVLGSWRAGVQVPAMLRSGWYRLPTNEQRDRAPLLVVTAAGRFDSREVRLQWATDEQAAAGHHGGSMEFADVGAAPAWRNLRAPLSAIPSTATQVRLVADDQDLAPQHWIALTPPRIPRVRTLQNVVGAADPVFLDWLVGLAFPCQRPFGHQYGVDETPKWRILPDRFGAEANSPVMDHNGGGPLGITELLMRATTVASYLKDDWFRDWGALQRLTPYYPDAQPADLNLGTVTRSGLWSPAPLRRG.

13 helical membrane-spanning segments follow: residues 28-50 (IARY…TPLL), 232-251 (AAMI…LHIL), 264-286 (PARW…WWHF), 341-360 (SIWM…WVIS), 373-392 (TSRA…WLPL), 431-453 (IGAL…LVAI), 466-488 (RFGV…IPIF), 530-552 (SIAR…AMSL), 565-582 (SRRI…MMFT), 586-608 (WTHH…AVAV), 620-642 (TVFA…GWWY), 657-679 (WRWS…AAWF), and 700-722 (LAGI…EVVS). Over residues 817–831 (GSEPGTEGGTTAAPG) the composition is skewed to low complexity. The tract at residues 817-836 (GSEPGTEGGTTAAPGINGSR) is disordered.

It belongs to the emb family.

It localises to the cell membrane. Arabinosyl transferase responsible for the polymerization of arabinose into the arabinan of arabinogalactan. The polypeptide is Probable arabinosyltransferase C (embC) (Mycobacterium bovis (strain ATCC BAA-935 / AF2122/97)).